The sequence spans 304 residues: Phosphoribosylaminoimidazole-succinocarboxamide synthase (304 aa).

The protein belongs to the SAICAR synthetase family.

It carries out the reaction 5-amino-1-(5-phospho-D-ribosyl)imidazole-4-carboxylate + L-aspartate + ATP = (2S)-2-[5-amino-1-(5-phospho-beta-D-ribosyl)imidazole-4-carboxamido]succinate + ADP + phosphate + 2 H(+). Its pathway is purine metabolism; IMP biosynthesis via de novo pathway; 5-amino-1-(5-phospho-D-ribosyl)imidazole-4-carboxamide from 5-amino-1-(5-phospho-D-ribosyl)imidazole-4-carboxylate: step 1/2. The protein is Phosphoribosylaminoimidazole-succinocarboxamide synthase of Corynebacterium efficiens (strain DSM 44549 / YS-314 / AJ 12310 / JCM 11189 / NBRC 100395).